A 427-amino-acid polypeptide reads, in one-letter code: Putative transporter YdfJ (427 aa).

The Cytoplasmic portion of the chain corresponds to 1 to 7 (MDFQLYS). Transmembrane regions (helical) follow at residues 8-28 (LGAA…AMAL) and 29-49 (ILAM…AFIF). At 50–74 (GKMGDRIGRKKVLFITITMMGICTT) the chain is on the cytoplasmic side. A helical membrane pass occupies residues 75–95 (LIGVLPTYAQIGVFAPILLVT). Residues 96–97 (LR) lie on the Periplasmic side of the membrane. A helical transmembrane segment spans residues 98 to 118 (IIQGLGAGAEISGAGTMLAEY). Residues 119-132 (APKGKRGIISSFVA) lie on the Cytoplasmic side of the membrane. A helical membrane pass occupies residues 133–153 (MGTNCGTLSATAIWAFMFFIL). The Periplasmic portion of the chain corresponds to 154 to 157 (SKEE). Residues 158 to 178 (LLAWGWRIPFLASVVVMVFAI) form a helical membrane-spanning segment. The Cytoplasmic segment spans residues 179-225 (WLRMNLKESPVFEKVNDSNQPTAKPAPAGSMFQSKSFWLATGLRFGQ). A helical transmembrane segment spans residues 226–246 (AGNSGLIQTFLAGYLVQTLLF). The Periplasmic portion of the chain corresponds to 247-251 (NKAIP). The chain crosses the membrane as a helical span at residues 252–272 (TDALMISSILGFMTIPFLGWL). Over 273 to 279 (SDKIGRR) the chain is Cytoplasmic. A helical membrane pass occupies residues 280-300 (IPYIIMNTSAIVLAWPMLSII). The Periplasmic portion of the chain corresponds to 301–307 (VDKSYAP). Residues 308 to 328 (STIMVALIVIHNCAVLGLFAL) traverse the membrane as a helical segment. At 329–351 (ENITMAEMFGCKNRFTRMAISKE) the chain is on the cytoplasmic side. A helical transmembrane segment spans residues 352–372 (IGGLIASGFGPILAGIFCTMT). Residue glutamate 373 is a topological domain, periplasmic. The chain crosses the membrane as a helical span at residues 374-394 (SWYPIAIMIMAYSVIGLISAL). The Cytoplasmic segment spans residues 395 to 427 (KMPEVKDRDLSALEDAAEDQPRVVRAAQPSRSL).

This sequence belongs to the major facilitator superfamily. Metabolite:H+ Symporter (MHS) family (TC 2.A.1.6) family.

It localises to the cell inner membrane. Its function is as follows. When overexpressed in human HEK-293 cells forms an inward rectifying potassium channel. This Escherichia coli (strain K12) protein is Putative transporter YdfJ (ydfJ).